The chain runs to 508 residues: Photosystem II CP47 reaction center protein (508 aa).

6 helical membrane passes run 21–36 (AVHIMHTALVSGWAGS), 101–115 (IVFSGLCFLAAIWHW), 140–156 (GIHLFLAGVACFGFGAF), 203–218 (IAAGTLGILAGLFHLS), 237–252 (VLSSSIAAVFFAAFVV), and 457–472 (TFALLFFFGHIWHGAR).

It belongs to the PsbB/PsbC family. PsbB subfamily. PSII is composed of 1 copy each of membrane proteins PsbA, PsbB, PsbC, PsbD, PsbE, PsbF, PsbH, PsbI, PsbJ, PsbK, PsbL, PsbM, PsbT, PsbX, PsbY, PsbZ, Psb30/Ycf12, at least 3 peripheral proteins of the oxygen-evolving complex and a large number of cofactors. It forms dimeric complexes. It depends on Binds multiple chlorophylls. PSII binds additional chlorophylls, carotenoids and specific lipids. as a cofactor.

The protein resides in the plastid. It is found in the chloroplast thylakoid membrane. Functionally, one of the components of the core complex of photosystem II (PSII). It binds chlorophyll and helps catalyze the primary light-induced photochemical processes of PSII. PSII is a light-driven water:plastoquinone oxidoreductase, using light energy to abstract electrons from H(2)O, generating O(2) and a proton gradient subsequently used for ATP formation. The sequence is that of Photosystem II CP47 reaction center protein from Agrostis stolonifera (Creeping bentgrass).